The following is a 607-amino-acid chain: Type 3 secretion system secretin (607 aa).

An N-terminal signal peptide occupies residues 1 to 33; the sequence is MAPACTTAHRRRAPLAAVLMLSLLPLLSPHADA. Residues 277-332 form a disordered region; the sequence is ASSSDRVPVSPPLPGSGAAAAAGSPASVWPELSKGRRDESNPIDAGGGAELASDAP. Residues 291 to 306 show a composition bias toward low complexity; sequence GSGAAAAAGSPASVWP.

Belongs to the bacterial secretin family. T3SS SctC subfamily. As to quaternary structure, the core secretion machinery of the T3SS is composed of approximately 20 different proteins, including cytoplasmic components, a base, an export apparatus and a needle. This subunit is part of the base, which anchors the injectisome in the bacterial cell envelope. Forms a stable homooligomeric complex.

Its subcellular location is the cell outer membrane. Component of the type III secretion system (T3SS), also called injectisome, which is used to inject bacterial effector proteins into eukaryotic host cells. Forms a ring-shaped multimeric structure with an apparent central pore in the outer membrane. Necessary for both basic pathogenicity and the induction of the hypersensitive response in resistant plants. This chain is Type 3 secretion system secretin, found in Xanthomonas euvesicatoria.